Here is a 375-residue protein sequence, read N- to C-terminus: UPF0612 protein C569.003 (375 aa).

It belongs to the UPF0612 family.

Its subcellular location is the cytoplasm. The protein is UPF0612 protein C569.003 of Schizosaccharomyces pombe (strain 972 / ATCC 24843) (Fission yeast).